The sequence spans 82 residues: Progonadoliberin-3 (82 aa).

The N-terminal stretch at 1–23 (MDLSNRTVVQVVVLALVAQVTLS) is a signal peptide. The residue at position 24 (Q24) is a Pyrrolidone carboxylic acid. Glycine amide is present on G33.

This sequence belongs to the GnRH family.

It localises to the secreted. Its function is as follows. Stimulates the secretion of gonadotropins. The sequence is that of Progonadoliberin-3 (gnrh3) from Salmo trutta (Brown trout).